A 677-amino-acid chain; its full sequence is Methionine--tRNA ligase (677 aa).

The short motif at 15-25 (PYANGSIHLGH) is the 'HIGH' region element. Zn(2+) is bound by residues C146, C149, C159, and C162. The 'KMSKS' region motif lies at 333–337 (KMSKS). Residue K336 coordinates ATP. Residues 575-677 (DFAKIDLRVA…SGAKPGQQVK (103 aa)) form the tRNA-binding domain.

It belongs to the class-I aminoacyl-tRNA synthetase family. MetG type 1 subfamily. In terms of assembly, homodimer. The cofactor is Zn(2+).

The protein localises to the cytoplasm. The enzyme catalyses tRNA(Met) + L-methionine + ATP = L-methionyl-tRNA(Met) + AMP + diphosphate. Is required not only for elongation of protein synthesis but also for the initiation of all mRNA translation through initiator tRNA(fMet) aminoacylation. This chain is Methionine--tRNA ligase, found in Cronobacter sakazakii (strain ATCC BAA-894) (Enterobacter sakazakii).